The sequence spans 240 residues: UPF0309 protein in nagA 3'region (240 aa).

An SIS domain is found at 31–206; it reads IVKRLVQGGI…CAQIIEILHE (176 aa).

The protein belongs to the UPF0309 family.

The protein is UPF0309 protein in nagA 3'region of Lysinibacillus sphaericus (Bacillus sphaericus).